The sequence spans 315 residues: Glutaminase (315 aa).

Substrate is bound by residues Ser-70, Asn-120, Glu-166, Asn-173, Tyr-197, Tyr-249, and Val-267.

This sequence belongs to the glutaminase family. Homotetramer.

The enzyme catalyses L-glutamine + H2O = L-glutamate + NH4(+). This Sinorhizobium fredii (strain NBRC 101917 / NGR234) protein is Glutaminase.